The sequence spans 233 residues: Phosphoribosylformylglycinamidine synthase subunit PurQ (233 aa).

The Glutamine amidotransferase type-1 domain occupies 3-233 (SAVLVFPGIN…GLAQHLAKAA (231 aa)). The active-site Nucleophile is C87. Residues H204 and E206 contribute to the active site.

In terms of assembly, part of the FGAM synthase complex composed of 1 PurL, 1 PurQ and 2 PurS subunits.

The protein resides in the cytoplasm. The enzyme catalyses N(2)-formyl-N(1)-(5-phospho-beta-D-ribosyl)glycinamide + L-glutamine + ATP + H2O = 2-formamido-N(1)-(5-O-phospho-beta-D-ribosyl)acetamidine + L-glutamate + ADP + phosphate + H(+). It catalyses the reaction L-glutamine + H2O = L-glutamate + NH4(+). It functions in the pathway purine metabolism; IMP biosynthesis via de novo pathway; 5-amino-1-(5-phospho-D-ribosyl)imidazole from N(2)-formyl-N(1)-(5-phospho-D-ribosyl)glycinamide: step 1/2. Its function is as follows. Part of the phosphoribosylformylglycinamidine synthase complex involved in the purines biosynthetic pathway. Catalyzes the ATP-dependent conversion of formylglycinamide ribonucleotide (FGAR) and glutamine to yield formylglycinamidine ribonucleotide (FGAM) and glutamate. The FGAM synthase complex is composed of three subunits. PurQ produces an ammonia molecule by converting glutamine to glutamate. PurL transfers the ammonia molecule to FGAR to form FGAM in an ATP-dependent manner. PurS interacts with PurQ and PurL and is thought to assist in the transfer of the ammonia molecule from PurQ to PurL. The sequence is that of Phosphoribosylformylglycinamidine synthase subunit PurQ from Rhodopseudomonas palustris (strain ATCC BAA-98 / CGA009).